A 406-amino-acid chain; its full sequence is RILP-like protein 1 (406 aa).

Residue Ser7 is modified to Phosphoserine. One can recognise an RH1 domain in the interval 10–97 (AALSALEKNV…RVERMDRIEK (88 aa)). An S-nitrosocysteine modification is found at Cys47. Residues 76 to 258 (ELDELRLELD…KLRERLQGEH (183 aa)) adopt a coiled-coil conformation. Disordered stretches follow at residues 255 to 280 (QGEH…ESIS) and 330 to 354 (EIEE…QPES). At Ser259 the chain carries Phosphoserine. Residues 262–280 (GEEEEAEIQPQPDGEESIS) are compositionally biased toward acidic residues. The 66-residue stretch at 294–359 (RPRFTLQELR…PQPESGIKRL (66 aa)) folds into the RH2 domain.

The protein belongs to the RILPL family. As to quaternary structure, interacts (when S-nitrosylated) with GAPDH. Interacts with RAB8A; interaction is dependent on the phosphorylation of 'Thr-72' of RAB8A. Interacts with RAB10 and RAB12; the interaction is dependent on the phosphorylation of 'Thr-73' of RAB10, and 'Ser-105' of RAB12. S-nitrosylation is required for the interaction with GAPDH.

The protein localises to the cytoplasm. Its subcellular location is the cytosol. It localises to the cell projection. It is found in the cilium. The protein resides in the cytoskeleton. The protein localises to the microtubule organizing center. Its subcellular location is the centrosome. It localises to the centriole. In terms of biological role, neuroprotective protein, which acts by sequestring GAPDH in the cytosol and prevent the apoptotic function of GAPDH in the nucleus. Competes with SIAH1 for binding GAPDH. Does not regulate lysosomal morphology and distribution. Plays a role in the regulation of cell shape and polarity. Plays a role in cellular protein transport, including protein transport away from primary cilia. Binds to RAB10 following LRRK2-mediated RAB10 phosphorylation which leads to inhibition of ciliogenesis. The protein is RILP-like protein 1 (Rilpl1) of Mus musculus (Mouse).